The following is a 192-amino-acid chain: Probable GTP-binding protein EngB (192 aa).

Positions 22–192 (SLPEIVFVGR…LLEQLENYTG (171 aa)) constitute an EngB-type G domain. GTP contacts are provided by residues 30–37 (GRSNVGKS), 57–61 (GKTQL), 75–78 (DLPG), 142–145 (TKYD), and 172–174 (YSA). 2 residues coordinate Mg(2+): S37 and T59.

It belongs to the TRAFAC class TrmE-Era-EngA-EngB-Septin-like GTPase superfamily. EngB GTPase family. Mg(2+) serves as cofactor.

Necessary for normal cell division and for the maintenance of normal septation. The polypeptide is Probable GTP-binding protein EngB (Prosthecochloris aestuarii (strain DSM 271 / SK 413)).